Consider the following 61-residue polypeptide: Large ribosomal subunit protein eL37 (61 aa).

4 residues coordinate Zn(2+): Cys18, Cys21, Cys33, and Cys36. Residues Cys18 to Cys36 form a C4-type zinc finger.

This sequence belongs to the eukaryotic ribosomal protein eL37 family. Zn(2+) is required as a cofactor.

In terms of biological role, binds to the 23S rRNA. This is Large ribosomal subunit protein eL37 from Methanosphaera stadtmanae (strain ATCC 43021 / DSM 3091 / JCM 11832 / MCB-3).